Reading from the N-terminus, the 299-residue chain is 4-hydroxy-tetrahydrodipicolinate synthase (299 aa).

T50 contributes to the pyruvate binding site. Y139 acts as the Proton donor/acceptor in catalysis. The Schiff-base intermediate with substrate role is filled by K167. A pyruvate-binding site is contributed by V209.

The protein belongs to the DapA family. In terms of assembly, homotetramer; dimer of dimers.

The protein localises to the cytoplasm. The catalysed reaction is L-aspartate 4-semialdehyde + pyruvate = (2S,4S)-4-hydroxy-2,3,4,5-tetrahydrodipicolinate + H2O + H(+). The protein operates within amino-acid biosynthesis; L-lysine biosynthesis via DAP pathway; (S)-tetrahydrodipicolinate from L-aspartate: step 3/4. Its function is as follows. Catalyzes the condensation of (S)-aspartate-beta-semialdehyde [(S)-ASA] and pyruvate to 4-hydroxy-tetrahydrodipicolinate (HTPA). The chain is 4-hydroxy-tetrahydrodipicolinate synthase from Synechococcus elongatus (strain ATCC 33912 / PCC 7942 / FACHB-805) (Anacystis nidulans R2).